Consider the following 399-residue polypeptide: Integral membrane protein GPR137B (399 aa).

The segment at 1-22 (MRPERPRPRGSAPGPMETPPWD) is disordered. Residues 1–46 (MRPERPRPRGSAPGPMETPPWDPARNDSLPPTLTPAVPPYVKLGLT) lie on the Lumenal side of the membrane. Asn26 is a glycosylation site (N-linked (GlcNAc...) asparagine). Residues 47-67 (VVYTVFYALLFVFIYVQLWLV) form a helical membrane-spanning segment. Residues 68–79 (LRYRHKRLSYQS) lie on the Cytoplasmic side of the membrane. Residues 80 to 100 (VFLFLCLFWASLRTVLFSFYF) traverse the membrane as a helical segment. Residues 101-111 (KDFVAANSLSP) are Lumenal-facing. A helical transmembrane segment spans residues 112 to 132 (FVFWLLYCFPVCLQFFTLTLM). The Cytoplasmic portion of the chain corresponds to 133–159 (NLYFTQVIFKAKSKYSPELLKYRLPLY). Residues 160–180 (LASLFISLVFLLVNLTCAVLV) form a helical membrane-spanning segment. At 181–188 (KTGNWERK) the chain is on the lumenal side. Residues 189-209 (VIVSVRVAINDTLFVLCAVSL) form a helical membrane-spanning segment. Over 210 to 237 (SICLYKISKMSLANIYLESKGSSVCQVT) the chain is Cytoplasmic. The helical transmembrane segment at 238–258 (AIGVTVILLYTSRACYNLFIL) threads the bilayer. At 259-292 (SFSQNKSVHSFDYDWYNVSDQADLKNQLGDAGYV) the chain is on the lumenal side. N-linked (GlcNAc...) asparagine glycans are attached at residues Asn263 and Asn275. The chain crosses the membrane as a helical span at residues 293–313 (LFGVVLFVWELLPTTLVVYFF). At 314–399 (RVRNPTKDLT…TLDPDKPSLG (86 aa)) the chain is on the cytoplasmic side.

The protein belongs to the GPR137 family. Interaction with RRAGA; increases RRAGA recruitment to lysosomes. Interacts with MTOR; this interaction is amino acid sensitive. Expressed in kidney, heart, brain and placenta.

The protein resides in the lysosome membrane. In terms of biological role, lysosomal integral membrane protein that regulates the localization and activity of mTORC1, a signaling complex promoting cell growth in response to growth factors, energy levels, and amino acids. Interacts with Rag GTPases and increases the lysosomial localization and activity of Rag GTPases and thereby regulates mTORC1 translocation and activity in lysosome. Involved in the regulation of lysosomal morphology and autophagy. Also acts as a negative regulator of osteoclast activity. Involved in interleukin-4-induced M2 macrophage polarization. In Homo sapiens (Human), this protein is Integral membrane protein GPR137B (GPR137B).